The chain runs to 221 residues: Kynurenine formamidase (221 aa).

Phenylalanine 30 provides a ligand contact to substrate. Zn(2+)-binding residues include histidine 60, histidine 64, and aspartate 66. Histidine 70 acts as the Proton donor/acceptor in catalysis. Zn(2+) is bound by residues histidine 172 and glutamate 184.

It belongs to the Cyclase 1 superfamily. KynB family. As to quaternary structure, homodimer. Zn(2+) serves as cofactor.

The enzyme catalyses N-formyl-L-kynurenine + H2O = L-kynurenine + formate + H(+). It participates in amino-acid degradation; L-tryptophan degradation via kynurenine pathway; L-kynurenine from L-tryptophan: step 2/2. Catalyzes the hydrolysis of N-formyl-L-kynurenine to L-kynurenine, the second step in the kynurenine pathway of tryptophan degradation. The polypeptide is Kynurenine formamidase (Polaromonas sp. (strain JS666 / ATCC BAA-500)).